Here is a 285-residue protein sequence, read N- to C-terminus: 1-deoxypentalenic acid 11-beta-hydroxylase (285 aa).

Arg117 lines the substrate pocket. Fe cation is bound by residues His137 and Asp139. 2-oxoglutarate-binding positions include 137–139 and Trp153; that span reads HQD. Residue Arg188 coordinates substrate. A Fe cation-binding site is contributed by His226. 2-oxoglutarate is bound by residues Ser228 and Arg240.

The protein belongs to the PhyH family. The cofactor is Fe cation. L-ascorbate serves as cofactor.

It carries out the reaction 1-deoxypentalenate + 2-oxoglutarate + O2 = 1-deoxy-11beta-hydroxypentalenate + succinate + CO2. The protein operates within antibiotic biosynthesis; neopentalenolactone biosynthesis. Functionally, catalyzes the conversion of 1-deoxypentalenic acid to 11-beta-hydroxy-1-deoxypentalenic acid in the biosynthesis of neopentalenolactone antibiotic. The chain is 1-deoxypentalenic acid 11-beta-hydroxylase (ptlH) from Streptomyces avermitilis (strain ATCC 31267 / DSM 46492 / JCM 5070 / NBRC 14893 / NCIMB 12804 / NRRL 8165 / MA-4680).